We begin with the raw amino-acid sequence, 48 residues long: Delta-stichotoxin-Hmg4b (48 aa).

3 disulfides stabilise this stretch: Cys-3-Cys-43, Cys-5-Cys-33, and Cys-26-Cys-44.

It belongs to the sea anemone sodium channel inhibitory toxin family. Type II subfamily.

The protein localises to the secreted. It is found in the nematocyst. Binds specifically to voltage-gated sodium channels (Nav), thereby delaying their inactivation during signal transduction. Its toxicity is greater than that of RpII (AC P01534). This is Delta-stichotoxin-Hmg4b from Heteractis magnifica (Magnificent sea anemone).